A 314-amino-acid polypeptide reads, in one-letter code: tRNA pseudouridine synthase B (314 aa).

A substrate-binding site is contributed by His43. Catalysis depends on Asp48, which acts as the Nucleophile. 3 residues coordinate substrate: Tyr76, Tyr179, and Leu200.

The protein belongs to the pseudouridine synthase TruB family. Type 1 subfamily.

It catalyses the reaction uridine(55) in tRNA = pseudouridine(55) in tRNA. In terms of biological role, responsible for synthesis of pseudouridine from uracil-55 in the psi GC loop of transfer RNAs. The chain is tRNA pseudouridine synthase B from Shigella flexneri.